Here is a 106-residue protein sequence, read N- to C-terminus: Trp operon repressor homolog (106 aa).

The DNA-binding element occupies 59-82 (QREIQQILNTSAATITRGSNMIKI).

Belongs to the TrpR family. As to quaternary structure, homodimer.

It localises to the cytoplasm. Its function is as follows. This protein is an aporepressor. When complexed with L-tryptophan it binds the operator region of the trp operon and prevents the initiation of transcription. This Histophilus somni (strain 2336) (Haemophilus somnus) protein is Trp operon repressor homolog.